Consider the following 481-residue polypeptide: Matrix metalloproteinase-20 (481 aa).

Positions 1-20 are cleaved as a signal peptide; it reads MLPASGLAVLLVTALKFSTA. Positions 21 to 105 are excised as a propeptide; sequence APSLPAASPR…PRCGVPDVAN (85 aa). Residue N64 is glycosylated (N-linked (GlcNAc...) asparagine). The Cysteine switch signature appears at 96–103; the sequence is PRCGVPDV. Residue C98 participates in Zn(2+) binding. Residues E162, A163, and D164 each coordinate Ca(2+). Zn(2+) is bound by residues H174 and D176. Residues D181, G182, R184, and T186 each coordinate Ca(2+). Residue H189 coordinates Zn(2+). Positions 195, 196, 198, and 200 each coordinate Ca(2+). H202 serves as a coordination point for Zn(2+). Ca(2+)-binding residues include D204 and E207. H224 provides a ligand contact to Zn(2+). E225 is a catalytic residue. The Zn(2+) site is built by H228 and H234. Hemopexin repeat units follow at residues 291 to 341, 342 to 387, 389 to 437, and 438 to 481; these read PDLC…FPQL, MSNV…GFPR, VQRI…FSGV, and NGQI…WIGC. An intrachain disulfide couples C294 to C481. An N-linked (GlcNAc...) asparagine glycan is attached at N297.

The protein belongs to the peptidase M10A family. It depends on Zn(2+) as a cofactor. Ca(2+) is required as a cofactor. In terms of processing, autoactivates at least at the 105-Asn-|-Tyr-106 site. Expressed in the enamel organ.

The protein resides in the secreted. It is found in the extracellular space. It localises to the extracellular matrix. Degrades amelogenin, the major protein component of the enamel matrix and two of the macromolecules characterizing the cartilage extracellular matrix: aggrecan and the cartilage oligomeric matrix protein (COMP). May play a central role in tooth enamel formation. Cleaves aggrecan at the '360-Ser-|-Phe-361' site. The polypeptide is Matrix metalloproteinase-20 (MMP20) (Bos taurus (Bovine)).